The chain runs to 238 residues: Large ribosomal subunit protein uL2 (238 aa).

The interval 200-238 is disordered; sequence HGGGLHQSVSRPSTVSRNAPPGRKVGHIAARRTGRKEGK. Residues 206 to 216 are compositionally biased toward polar residues; that stretch reads QSVSRPSTVSR. Basic residues predominate over residues 223 to 238; that stretch reads KVGHIAARRTGRKEGK.

It belongs to the universal ribosomal protein uL2 family. As to quaternary structure, part of the 50S ribosomal subunit. Forms a bridge to the 30S subunit in the 70S ribosome.

One of the primary rRNA binding proteins. Required for association of the 30S and 50S subunits to form the 70S ribosome, for tRNA binding and peptide bond formation. It has been suggested to have peptidyltransferase activity; this is somewhat controversial. Makes several contacts with the 16S rRNA in the 70S ribosome. In Saccharolobus islandicus (strain Y.N.15.51 / Yellowstone #2) (Sulfolobus islandicus), this protein is Large ribosomal subunit protein uL2.